Reading from the N-terminus, the 138-residue chain is MVLNQNKNSNKAEYGGIVVSVFYLILFFLILNITIYFHKSTNFTVVVKNSVLTSFFVNLLLVCLQGIFRLKTCDGMRYEISKFNRYLKLGSVYAKPLVSFNQYQDQSATYRQKTSGFWWMNLIVYLVGSLVSGLVSLL.

Transmembrane regions (helical) follow at residues 17 to 37 (IVVSVFYLILFFLILNITIYF), 43 to 63 (FTVVVKNSVLTSFFVNLLLVC), and 117 to 137 (FWWMNLIVYLVGSLVSGLVSL).

The protein localises to the cell membrane. This is an uncharacterized protein from Mycoplasma genitalium (strain ATCC 33530 / DSM 19775 / NCTC 10195 / G37) (Mycoplasmoides genitalium).